We begin with the raw amino-acid sequence, 589 residues long: UvrABC system protein C (589 aa).

The region spanning Pro-13–Phe-90 is the GIY-YIG domain. The region spanning Lys-194–Thr-229 is the UVR domain.

Belongs to the UvrC family. As to quaternary structure, interacts with UvrB in an incision complex.

It is found in the cytoplasm. The UvrABC repair system catalyzes the recognition and processing of DNA lesions. UvrC both incises the 5' and 3' sides of the lesion. The N-terminal half is responsible for the 3' incision and the C-terminal half is responsible for the 5' incision. This chain is UvrABC system protein C, found in Aster yellows witches'-broom phytoplasma (strain AYWB).